Here is a 152-residue protein sequence, read N- to C-terminus: Transcriptional regulator MraZ (152 aa).

2 consecutive SpoVT-AbrB domains span residues 5 to 52 and 81 to 124; these read ASAI…PLHE and AQDC…EESA.

It belongs to the MraZ family. Forms oligomers.

It localises to the cytoplasm. It is found in the nucleoid. This chain is Transcriptional regulator MraZ, found in Shewanella frigidimarina (strain NCIMB 400).